A 109-amino-acid chain; its full sequence is Putative double-stranded DNA mimic protein KPK_2119 (109 aa).

Belongs to the putative dsDNA mimic protein family.

In terms of biological role, may act as a double-stranded DNA (dsDNA) mimic. Probably regulates the activity of a dsDNA-binding protein. The sequence is that of Putative double-stranded DNA mimic protein KPK_2119 from Klebsiella pneumoniae (strain 342).